We begin with the raw amino-acid sequence, 170 residues long: Tubulin polymerization-promoting protein family member 2 (170 aa).

The disordered stretch occupies residues 127–170; that stretch reads TGTHKERFDESGKGKGIAGREEMTDNTGYVSGYKGSGTYDKKTK. Positions 129 to 149 are enriched in basic and acidic residues; that stretch reads THKERFDESGKGKGIAGREEM.

It belongs to the TPPP family. Expressed in spermatids. Detected in liver cancer (at protein level).

It localises to the cytoplasm. It is found in the cytosol. The protein localises to the cell projection. The protein resides in the cilium. Its subcellular location is the flagellum. Probable regulator of microtubule dynamics required for sperm motility. In contrast to other members of the family, has no microtubule bundling activity. This Homo sapiens (Human) protein is Tubulin polymerization-promoting protein family member 2.